The following is a 310-amino-acid chain: 4-diphosphocytidyl-2-C-methyl-D-erythritol kinase (310 aa).

Lysine 10 is an active-site residue. 102 to 112 (PVAGGMAGGSA) lines the ATP pocket. Residue aspartate 144 is part of the active site. Residues 289-310 (TRTARGPAAGAQLLPGPVGSFA) form a disordered region.

Belongs to the GHMP kinase family. IspE subfamily.

The enzyme catalyses 4-CDP-2-C-methyl-D-erythritol + ATP = 4-CDP-2-C-methyl-D-erythritol 2-phosphate + ADP + H(+). Its pathway is isoprenoid biosynthesis; isopentenyl diphosphate biosynthesis via DXP pathway; isopentenyl diphosphate from 1-deoxy-D-xylulose 5-phosphate: step 3/6. Functionally, catalyzes the phosphorylation of the position 2 hydroxy group of 4-diphosphocytidyl-2C-methyl-D-erythritol. The sequence is that of 4-diphosphocytidyl-2-C-methyl-D-erythritol kinase from Cutibacterium acnes (strain DSM 16379 / KPA171202) (Propionibacterium acnes).